The sequence spans 429 residues: Large ribosomal subunit protein mL37 (429 aa).

Residues 1–29 (MALRPVVLRRAPAHSRGILTRPGPPRPRG) constitute a mitochondrion transit peptide. The tract at residues 12-45 (PAHSRGILTRPGPPRPRGPLPRTPWTTRGPPPDQ) is disordered. The segment covering 22–33 (PGPPRPRGPLPR) has biased composition (pro residues).

It belongs to the mitochondrion-specific ribosomal protein mL37 family. Component of the mitochondrial ribosome large subunit (39S) which comprises a 16S rRNA and about 50 distinct proteins.

The protein resides in the mitochondrion. The sequence is that of Large ribosomal subunit protein mL37 (MRPL37) from Gallus gallus (Chicken).